Here is a 417-residue protein sequence, read N- to C-terminus: Calreticulin (417 aa).

The first 17 residues, 1–17 (MLLPVPLLLGLLGLAAA), serve as a signal peptide directing secretion. Residues 18-197 (DPTVYFKEQF…NSQVESGSLE (180 aa)) form an N-domain region. Glutamine 26 is a Ca(2+) binding site. Lysine 48 is modified (N6-acetyllysine). Ca(2+) contacts are provided by lysine 62 and lysine 64. An N6-(2-hydroxyisobutyryl)lysine modification is found at lysine 64. Residues tyrosine 109, lysine 111, tyrosine 128, and aspartate 135 each coordinate an alpha-D-glucoside. The cysteines at positions 137 and 163 are disulfide-linked. The residue at position 159 (lysine 159) is an N6-acetyllysine. An N-linked (GlcNAc...) asparagine glycan is attached at asparagine 179. The 1-1 repeat unit spans residues 191–202 (VESGSLEDDWDF). Residues 191-255 (VESGSLEDDW…DAKKPEDWDE (65 aa)) are 4 X approximate repeats. A disordered region spans residues 193–270 (SGSLEDDWDF…WEPPVIQNPE (78 aa)). The segment at 198–308 (DDWDFLPPKK…YSPDSNIYAY (111 aa)) is P-domain. Residues 207-251 (KIKDPDAAKPEDWDDRAKIDDPTDSKPEDWDKPEHIPDPDAKKPE) show a composition bias toward basic and acidic residues. The residue at position 209 (lysine 209) is an N6-acetyllysine. Repeat copies occupy residues 210-221 (DPDAAKPEDWDD), 227-238 (DPTDSKPEDWDK), 244-255 (DPDAKKPEDWDE), 259-269 (GEWEPPVIQNP), 273-283 (GEWKPRQIDNP), and 287-297 (GIWIHPEIDNP). The tract at residues 237 to 270 (DKPEHIPDPDAKKPEDWDEEMDGEWEPPVIQNPE) is interaction with PPIB. The segment covering 252 to 261 (DWDEEMDGEW) has biased composition (acidic residues). A 3 X approximate repeats region spans residues 259 to 297 (GEWEPPVIQNPEYKGEWKPRQIDNPEYKGIWIHPEIDNP). Positions 309–417 (ENFAVLGLDL…AAAGQAKDEL (109 aa)) are C-domain. Aspartate 317 contributes to the an alpha-D-glucoside binding site. Aspartate 328 is a binding site for Ca(2+). The tract at residues 350–417 (TKAAEKQMKD…AAAGQAKDEL (68 aa)) is disordered. Over residues 352 to 378 (AAEKQMKDKQDEEQRLHEEEEEKKGKE) the composition is skewed to basic and acidic residues. Residues 379 to 408 (EEEADKDDDEDKDEDEEDEDEKEEEEEEDA) show a composition bias toward acidic residues. The Prevents secretion from ER motif lies at 414 to 417 (KDEL).

This sequence belongs to the calreticulin family. As to quaternary structure, monomer. Component of an EIF2 complex at least composed of CELF1/CUGBP1, CALR, CALR3, EIF2S1, EIF2S2, HSP90B1 and HSPA5. Interacts with PDIA3/ERp57 and SPACA9. Interacts with TRIM21. Interacts with NR3C1. Interacts with PPIB. Interacts (via P-domain) with PDIA5. Interacts with GABARAP. Interacts with CLCC1.

The protein localises to the endoplasmic reticulum lumen. It localises to the cytoplasm. Its subcellular location is the cytosol. It is found in the secreted. The protein resides in the extracellular space. The protein localises to the extracellular matrix. It localises to the cell surface. Its subcellular location is the sarcoplasmic reticulum lumen. It is found in the cytoplasmic vesicle. The protein resides in the secretory vesicle. The protein localises to the cortical granule. It localises to the cytolytic granule. Functionally, calcium-binding chaperone that promotes folding, oligomeric assembly and quality control in the endoplasmic reticulum (ER) via the calreticulin/calnexin cycle. This lectin interacts transiently with almost all of the monoglucosylated glycoproteins that are synthesized in the ER. Interacts with the DNA-binding domain of NR3C1 and mediates its nuclear export. Involved in maternal gene expression regulation. May participate in oocyte maturation via the regulation of calcium homeostasis. Present in the cortical granules of non-activated oocytes, is exocytosed during the cortical reaction in response to oocyte activation and might participate in the block to polyspermy. In Bos taurus (Bovine), this protein is Calreticulin (CALR).